The following is a 1369-amino-acid chain: Mediator of RNA polymerase II transcription subunit 23 (1369 aa).

The tract at residues 1337–1369 (TESAAPPPPPMNSGSPAPQPNQVPVSVPLTVTQ) is disordered. Over residues 1341–1357 (APPPPPMNSGSPAPQPN) the composition is skewed to pro residues.

The protein belongs to the Mediator complex subunit 23 family. Component of the Mediator complex.

The protein resides in the nucleus. Component of the Mediator complex, a coactivator involved in the regulated transcription of nearly all RNA polymerase II-dependent genes. Mediator functions as a bridge to convey information from gene-specific regulatory proteins to the basal RNA polymerase II transcription machinery. Mediator is recruited to promoters by direct interactions with regulatory proteins and serves as a scaffold for the assembly of a functional preinitiation complex with RNA polymerase II and the general transcription factors. The sequence is that of Mediator of RNA polymerase II transcription subunit 23 (med23) from Xenopus laevis (African clawed frog).